The sequence spans 918 residues: Pre-pro-metalloprotease PrtV (918 aa).

A signal peptide spans M1–A23. The propeptide occupies Q24–F105. Residue H330 participates in Zn(2+) binding. The active site involves E331. H334 is a binding site for Zn(2+). Residues I757, D782, D821, and D825 each contribute to the Ca(2+) site. 2 PKD domains span residues A758–V835 and V855–L918. Residues V835–L918 constitute a propeptide that is removed on maturation.

It belongs to the peptidase M6 family. Zn(2+) serves as cofactor. Post-translationally, prtV is expressed as an inactive, multidomain, 102 kDa pre-pro-metalloprotease. To form a catalytically active protease, PrtV is first secreted, and then it undergoes N- and C-terminal cleavages during envelope translocation to yield a 81 kDa pro-metalloprotease. Outside the cell, the 81 kDa pro-metalloprotease undergoes an auto-cleavage. The two major products of autoproteolysis (37 kDa and 18 kDa) together form the so called 55 kDa active complex.

Its subcellular location is the secreted. Calcium plays an important structural role, providing stability to this protein in the cytoplasm. Outside the cell, the decrease of the calcium concentration triggers the autoproteolysis. PrtV activity is increased by 25 mM of Sr(2+) or Mg(2+) and to some extent by Ba(2+); however, Ba(2+) inhibits PrtV at higher concentrations. Completely inhibited by EDTA and 1,10-phenanthroline. Functionally, metalloprotease that exhibits a cytotoxic effect leading to cell death. In host tissues, it could play a role in pathogenesis by modulating the stability of the extracellular matrix components such as fibronectin and fibrinogen. Also able to cleave plasminogen. The chain is Pre-pro-metalloprotease PrtV from Vibrio cholerae serotype O1 (strain ATCC 39315 / El Tor Inaba N16961).